A 208-amino-acid chain; its full sequence is FAS-associated death domain protein (208 aa).

The region spanning 3–81 is the DED domain; it reads PFLVLLHSVS…RHDLLRRVDD (79 aa). The Death domain maps to 97–181; sequence LCAAFNVICD…LVADLVQEVQ (85 aa). Arg-117 carries (Microbial infection) N-beta-linked (GlcNAc) arginine glycosylation. Residues 187–208 are disordered; sequence QNRSGAMSPMSWNSDASTSEAS. Position 194 is a phosphoserine (Ser-194).

Can self-associate. Component of the AIM2 PANoptosome complex, a multiprotein complex that drives inflammatory cell death (PANoptosis). Component of the death-induced signaling complex (DISC) composed of cell surface receptor FAS/CD95 or TNFRSF1A, adapter protein FADD and the CASP8 protease; recruitment of CASP8 to the complex is required for processing of CASP8 into the p18 and p10 subunits. Interacts (via death domain) with FAS (via death domain). Interacts directly (via DED domain) with NOL3 (via CARD domain); inhibits death-inducing signaling complex (DISC) assembly by inhibiting the increase in FAS-FADD binding induced by FAS activation. Interacts with CFLAR, PEA15 and MBD4. When phosphorylated, part of a complex containing HIPK3 and FAS. May interact with MAVS/IPS1. Interacts with MOCV v-CFLAR protein and PIDD1. Interacts with RIPK1 and TRADD. Interacts with stimulated TNFRSF10B. Interacts with DDX24. In terms of assembly, (Microbial infection) Interacts with human papillomavirus 16/HPV16 protein E6. As to quaternary structure, (Microbial infection) Interacts with molluscum contagiosum virus proteins MC159L/v-CFLAR and MC160L. In terms of processing, (Microbial infection) Glycosylated at Arg-117 by enteropathogenic E.coli protein NleB1, C.rodentium protein NleB and S.typhimurium protein Ssek1: arginine GlcNAcylation prevents recruitment of caspase-8 or caspase-10 to the activated Fas (CD95) or TNFR-1 receptors. Expressed in a wide variety of tissues, except for peripheral blood mononuclear leukocytes.

It is found in the cytoplasm. Functionally, apoptotic adapter molecule that recruits caspases CASP8 or CASP10 to the activated FAS/CD95 or TNFRSF1A/TNFR-1 receptors. The resulting aggregate called the death-inducing signaling complex (DISC) performs CASP8 proteolytic activation. Active CASP8 initiates the subsequent cascade of caspases mediating apoptosis. Involved in interferon-mediated antiviral immune response, playing a role in the positive regulation of interferon signaling. The chain is FAS-associated death domain protein from Homo sapiens (Human).